A 357-amino-acid polypeptide reads, in one-letter code: Protein-arginine kinase (357 aa).

The 232-residue stretch at 24-255 (IVISTRLRIA…RQIIEQERVA (232 aa)) folds into the Phosphagen kinase C-terminal domain. Residues 27-31 (STRLR), H92, R126, 177-181 (RASVM), and 208-213 (RGIYGE) each bind ATP. An RDXXRA motif of the pArg binding pocket involved in allosteric regulation motif is present at residues 338-343 (RDERRA).

This sequence belongs to the ATP:guanido phosphotransferase family.

The catalysed reaction is L-arginyl-[protein] + ATP = N(omega)-phospho-L-arginyl-[protein] + ADP + H(+). Its activity is regulated as follows. Appears to be allosterically activated by the binding of pArg-containing polypeptides to the pArg-binding pocket localized in the C-terminal domain of McsB. Catalyzes the specific phosphorylation of arginine residues in proteins. The sequence is that of Protein-arginine kinase from Brevibacillus brevis (strain 47 / JCM 6285 / NBRC 100599).